The following is a 311-amino-acid chain: GTP cyclohydrolase MptA (311 aa).

This sequence belongs to the GTP cyclohydrolase IV family. As to quaternary structure, homodimer. Fe(2+) is required as a cofactor.

The catalysed reaction is GTP + H2O = 7,8-dihydroneopterin 2',3'-cyclic phosphate + formate + diphosphate + H(+). It participates in cofactor biosynthesis; 5,6,7,8-tetrahydromethanopterin biosynthesis. In terms of biological role, converts GTP to 7,8-dihydro-D-neopterin 2',3'-cyclic phosphate, the first intermediate in the biosynthesis of coenzyme methanopterin. This Halobacterium salinarum (strain ATCC 29341 / DSM 671 / R1) protein is GTP cyclohydrolase MptA.